The chain runs to 303 residues: tRNA pseudouridine synthase B (303 aa).

Asp47 acts as the Nucleophile in catalysis.

This sequence belongs to the pseudouridine synthase TruB family. Type 1 subfamily.

It carries out the reaction uridine(55) in tRNA = pseudouridine(55) in tRNA. Its function is as follows. Responsible for synthesis of pseudouridine from uracil-55 in the psi GC loop of transfer RNAs. The polypeptide is tRNA pseudouridine synthase B (Roseobacter denitrificans (strain ATCC 33942 / OCh 114) (Erythrobacter sp. (strain OCh 114))).